A 196-amino-acid chain; its full sequence is uncharacterized protein (196 aa).

Residues 12 to 66 form the HTH cro/C1-type domain; that stretch reads LRAAREAQKMSQRELSARSGLTQSHISQIERGTMEPGLGSLVDVARALDLEIVLA. The H-T-H motif DNA-binding region spans 23–42; that stretch reads QRELSARSGLTQSHISQIER. The segment at 174 to 196 is disordered; that stretch reads VHRDRDDAVPRSAYALDEEDDNA.

This is an uncharacterized protein from Sinorhizobium fredii (strain NBRC 101917 / NGR234).